A 318-amino-acid polypeptide reads, in one-letter code: Pheromone-regulated membrane protein 5 (318 aa).

A helical transmembrane segment spans residues 78–98 (FIXVGGIAGVIFLAILLWWVI). S129 carries the post-translational modification Phosphoserine. Residues 238–247 (TISSSSASSL) are compositionally biased toward low complexity. Residues 238–318 (TISSSSASSL…HMLEGKEQDE (81 aa)) are disordered. A compositionally biased stretch (basic and acidic residues) spans 250–261 (GNEKEVGEDIRK). Residues 276–285 (SPESDGSVNR) show a composition bias toward polar residues. 3 positions are modified to phosphoserine: S279, S282, and S288. Residues 309–318 (HMLEGKEQDE) show a composition bias toward basic and acidic residues. K314 is covalently cross-linked (Glycyl lysine isopeptide (Lys-Gly) (interchain with G-Cter in ubiquitin)).

The protein belongs to the PRM5 family.

Its subcellular location is the membrane. This Saccharomyces cerevisiae (strain FostersO) (Baker's yeast) protein is Pheromone-regulated membrane protein 5 (PRM5).